The sequence spans 77 residues: Adipokinetic prohormone type 3 (77 aa).

The N-terminal stretch at 1-22 is a signal peptide; the sequence is MQVRAVLVLAVVALVAVATSRA. Position 23 is a pyrrolidone carboxylic acid (Gln23). A Tryptophan amide modification is found at Trp30.

The protein belongs to the AKH/HRTH/RPCH family.

The protein resides in the secreted. Its function is as follows. This hormone, released from cells in the corpora cardiaca, causes release of diglycerides from the fat body and stimulation of muscles to use these diglycerides as an energy source during energy-demanding processes. This Locusta migratoria (Migratory locust) protein is Adipokinetic prohormone type 3.